The primary structure comprises 138 residues: Fluoride-specific ion channel FluC (138 aa).

The next 4 membrane-spanning stretches (helical) occupy residues 34–54, 60–80, 88–108, and 112–132; these read FMPKLWEGLSVGAGAAVGACA, MQFGEGLWPILAINMLGSFLM, FWGTGVLGGFTTFSAFAVVLV, and LPHAVAYLTVTVVSCVAAWLM. Residues Gly95 and Thr98 each coordinate Na(+).

This sequence belongs to the fluoride channel Fluc/FEX (TC 1.A.43) family.

It localises to the cell membrane. The catalysed reaction is fluoride(in) = fluoride(out). Na(+) is not transported, but it plays an essential structural role and its presence is essential for fluoride channel function. Its function is as follows. Fluoride-specific ion channel. Important for reducing fluoride concentration in the cell, thus reducing its toxicity. This chain is Fluoride-specific ion channel FluC, found in Corynebacterium efficiens (strain DSM 44549 / YS-314 / AJ 12310 / JCM 11189 / NBRC 100395).